We begin with the raw amino-acid sequence, 431 residues long: Glutamate-1-semialdehyde 2,1-aminomutase (431 aa).

Lys270 bears the N6-(pyridoxal phosphate)lysine mark.

It belongs to the class-III pyridoxal-phosphate-dependent aminotransferase family. HemL subfamily. In terms of assembly, homodimer. It depends on pyridoxal 5'-phosphate as a cofactor.

It is found in the cytoplasm. It catalyses the reaction (S)-4-amino-5-oxopentanoate = 5-aminolevulinate. Its pathway is porphyrin-containing compound metabolism; protoporphyrin-IX biosynthesis; 5-aminolevulinate from L-glutamyl-tRNA(Glu): step 2/2. This chain is Glutamate-1-semialdehyde 2,1-aminomutase, found in Limosilactobacillus reuteri subsp. reuteri (strain JCM 1112) (Lactobacillus reuteri).